A 206-amino-acid polypeptide reads, in one-letter code: Erythropoietin (206 aa).

Residues 1–40 (MCEPAPPKPTQSAWHSFPECPALLLLLSLLLLPLGLPVLG) form the signal peptide. Intrachain disulfides connect cysteine 47–cysteine 201 and cysteine 69–cysteine 73. Asparagine 64 carries an N-linked (GlcNAc...) asparagine glycan. N-linked (GlcNAc...) asparagine glycans are attached at residues asparagine 78 and asparagine 123.

It belongs to the EPO/TPO family. Produced by kidney or liver of adult mammals and by liver of fetal or neonatal mammals.

It localises to the secreted. In terms of biological role, hormone involved in the regulation of erythrocyte proliferation and differentiation and the maintenance of a physiological level of circulating erythrocyte mass. Binds to EPOR leading to EPOR dimerization and JAK2 activation thereby activating specific downstream effectors, including STAT1 and STAT3. This is Erythropoietin (EPO) from Canis lupus familiaris (Dog).